A 682-amino-acid polypeptide reads, in one-letter code: Potassium-transporting ATPase ATP-binding subunit (682 aa).

The next 4 membrane-spanning stretches (helical) occupy residues 34–54 (PVMF…IAMA), 62–82 (ALFS…ANFA), 219–239 (IALT…TATL), and 254–274 (VLVA…LSAI). The active-site 4-aspartylphosphate intermediate is the aspartate 307. ATP contacts are provided by residues aspartate 344, glutamate 348, 377–384 (FTAQSRMS), and lysine 395. Residues aspartate 518 and aspartate 522 each contribute to the Mg(2+) site. 3 helical membrane passes run 588 to 608 (FAII…LNIM), 616 to 636 (AILS…PLAL), and 656 to 676 (IYGL…DLLL).

Belongs to the cation transport ATPase (P-type) (TC 3.A.3) family. Type IA subfamily. In terms of assembly, the system is composed of three essential subunits: KdpA, KdpB and KdpC.

The protein localises to the cell inner membrane. It carries out the reaction K(+)(out) + ATP + H2O = K(+)(in) + ADP + phosphate + H(+). Its function is as follows. Part of the high-affinity ATP-driven potassium transport (or Kdp) system, which catalyzes the hydrolysis of ATP coupled with the electrogenic transport of potassium into the cytoplasm. This subunit is responsible for energy coupling to the transport system and for the release of the potassium ions to the cytoplasm. The protein is Potassium-transporting ATPase ATP-binding subunit of Escherichia coli O139:H28 (strain E24377A / ETEC).